Here is a 397-residue protein sequence, read N- to C-terminus: Lysophospholipid transporter LplT (397 aa).

At 1-17 (MSESVHTNTSLWSKGMK) the chain is on the periplasmic side. Residues 18-38 (AVIVAQFLSAFGDNALLFATL) form a helical membrane-spanning segment. Over 39 to 52 (ALLKAQFYPEWSQP) the chain is Cytoplasmic. The helical transmembrane segment at 53-73 (ILQMVFVGAYILFAPFVGQVA) threads the bilayer. The Periplasmic segment spans residues 74–90 (DSFAKGRVMMFANGLKL). A helical transmembrane segment spans residues 91 to 111 (LGAASICFGINPFLGYTLVGV). The Cytoplasmic portion of the chain corresponds to 112–144 (GAAAYSPAKYGILGELTTGSKLVKANGLMEAST). Residues 145-165 (IAAILLGSVAGGVLADWHVLV) traverse the membrane as a helical segment. Ala166 is a topological domain (periplasmic). Residues 167–187 (LAACALAYGGAVVANIYIPKL) form a helical membrane-spanning segment. At 188 to 226 (AAARPGQSWNLINMTRSFLNACTSLWRNGETRFSLVGTS) the chain is on the cytoplasmic side. The helical transmembrane segment at 227 to 247 (LFWGAGVTLRFLLVLWVPVAL) threads the bilayer. The Periplasmic portion of the chain corresponds to 248–256 (GITDNATPT). A helical membrane pass occupies residues 257–277 (YLNAMVAIGIVVGAGAAAKLV). At 278–280 (TLE) the chain is on the cytoplasmic side. Residues 281–301 (TVSRCMPAGILIGVVVLIFSL) form a helical membrane-spanning segment. Residues 302 to 304 (QHE) are Periplasmic-facing. The helical transmembrane segment at 305-325 (LLPAYALLMLIGVLGGFFVVP) threads the bilayer. Residues 326–343 (LNALLQERGKKSVGAGNA) lie on the Cytoplasmic side of the membrane. Residues 344–364 (IAVQNLGENSAMLLMLGIYSL) traverse the membrane as a helical segment. Residues 365–366 (AV) lie on the Periplasmic side of the membrane. A helical membrane pass occupies residues 367–387 (MVGIPVVPIGIGFGALFALAI). Residues 388-397 (TALWIWQRRY) are Cytoplasmic-facing.

Belongs to the major facilitator superfamily. LplT (TC 2.A.1.42) family.

The protein resides in the cell inner membrane. Its function is as follows. Catalyzes the facilitated diffusion of 2-acyl-glycero-3-phosphoethanolamine (2-acyl-GPE) into the cell. In Escherichia coli O127:H6 (strain E2348/69 / EPEC), this protein is Lysophospholipid transporter LplT.